A 154-amino-acid polypeptide reads, in one-letter code: Insulin-like peptide 1 (154 aa).

Residues 1-29 (MFSQHNGAAVHGLRLQSLLIAAMLTAAMA) form the signal peptide. 3 cysteine pairs are disulfide-bonded: Cys49/Cys138, Cys61/Cys151, and Cys137/Cys142. Positions 72-92 (RESLLGNSDDDEDTEQEVQDD) are disordered. Positions 73–122 (ESLLGNSDDDEDTEQEVQDDSSMWQTLDGAGYSFSPLLTNLYGSEVLIKM) are cleaved as a propeptide — connecting peptide. Over residues 79-91 (SDDDEDTEQEVQD) the composition is skewed to acidic residues.

It belongs to the insulin family. In terms of assembly, heterodimer of a B chain and an A chain linked by two disulfide bonds.

The protein resides in the secreted. Its function is as follows. Possible ligand of InR/insulin-like receptor. The protein is Insulin-like peptide 1 of Drosophila melanogaster (Fruit fly).